We begin with the raw amino-acid sequence, 230 residues long: Sugar fermentation stimulation protein homolog (230 aa).

The protein belongs to the SfsA family.

The chain is Sugar fermentation stimulation protein homolog from Clostridium perfringens (strain 13 / Type A).